The following is a 391-amino-acid chain: Multidrug resistance protein MdtL (391 aa).

12 helical membrane-spanning segments follow: residues 4 to 24 (FLIC…MYLV), 42 to 62 (IAFS…GKVA), 69 to 89 (PVAI…SLAE), 93 to 113 (LFLA…VVAF), 131 to 151 (LLNG…HLIM), 158 to 178 (SLFW…LFIL), 203 to 222 (FFLS…LTFV), 245 to 265 (ALTA…LGIF), 269 to 289 (TLMI…AVSP), 293 to 313 (VSLF…GVAM), 331 to 351 (LGIA…VVGI), and 356 to 376 (MLIG…MFVA).

This sequence belongs to the major facilitator superfamily. DHA1 family. MdtL (TC 2.A.1.2.22) subfamily.

It localises to the cell inner membrane. Confers resistance to chloramphenicol. This Escherichia coli O127:H6 (strain E2348/69 / EPEC) protein is Multidrug resistance protein MdtL.